We begin with the raw amino-acid sequence, 147 residues long: Bis(5'-nucleosyl)-tetraphosphatase [asymmetrical] (147 aa).

Position 2 is an N-acetylalanine (Ala-2). In terms of domain architecture, Nudix hydrolase spans 2–139 (ALRACGLIIF…EMKATLQEGH (138 aa)). Positions 43–64 (GHVDPGENDLETALRETQEETG) match the Nudix box motif.

This sequence belongs to the Nudix hydrolase family. The cofactor is a divalent metal cation.

The enzyme catalyses P(1),P(4)-bis(5'-guanosyl) tetraphosphate + H2O = GMP + GTP + 2 H(+). It carries out the reaction a 5'-end CoA-ribonucleoside in mRNA + H2O = a 5'-end phospho-adenosine-phospho-ribonucleoside in mRNA + (R)-4'-phosphopantetheine + 2 H(+). The catalysed reaction is a 5'-end FAD-phospho-ribonucleoside in mRNA + H2O = a 5'-end phospho-adenosine-phospho-ribonucleoside in mRNA + FMN + 2 H(+). In terms of biological role, catalyzes the asymmetric hydrolysis of diadenosine 5',5'''-P1,P4-tetraphosphate (Ap4A) to yield AMP and ATP. Exhibits decapping activity towards FAD-capped RNAs and dpCoA-capped RNAs in vitro. The polypeptide is Bis(5'-nucleosyl)-tetraphosphatase [asymmetrical] (Nudt2) (Rattus norvegicus (Rat)).